A 467-amino-acid polypeptide reads, in one-letter code: Putative vacuolar protein sorting-associated protein TDA6 (467 aa).

A helical transmembrane segment spans residues 8 to 28; sequence ILLWFLIVDLSVIRALVLPPL. 3 N-linked (GlcNAc...) asparagine glycosylation sites follow: Asn-61, Asn-124, and Asn-141.

Belongs to the VPS62 family.

Its subcellular location is the membrane. Involved in vacuolar protein sorting. This Saccharomyces cerevisiae (strain ATCC 204508 / S288c) (Baker's yeast) protein is Putative vacuolar protein sorting-associated protein TDA6 (TDA6).